The following is a 392-amino-acid chain: Chalcone synthase B (392 aa).

The active site involves Cys-167.

This sequence belongs to the thiolase-like superfamily. Chalcone/stilbene synthases family. Expressed at low level in seedlings after illumination with UV light. No expression in flowers or tissue culture.

The catalysed reaction is (E)-4-coumaroyl-CoA + 3 malonyl-CoA + 3 H(+) = 2',4,4',6'-tetrahydroxychalcone + 3 CO2 + 4 CoA. It functions in the pathway secondary metabolite biosynthesis; flavonoid biosynthesis. The primary product of this enzyme is 4,2',4',6'-tetrahydroxychalcone (also termed naringenin-chalcone or chalcone) which can under specific conditions spontaneously isomerize into naringenin. In Petunia hybrida (Petunia), this protein is Chalcone synthase B (CHSB).